The chain runs to 377 residues: 26S proteasome non-ATPase regulatory subunit 4 (377 aa).

A VWFA domain is found at 5-188; that stretch reads STMVCVDNSE…LADALISSPI (184 aa). A Glycyl lysine isopeptide (Lys-Gly) (interchain with G-Cter in SUMO2) cross-link involves residue lysine 122. The interaction with UBQLN1 stretch occupies residues 197–262; the sequence is LGLGASDFEF…TEDSDDALLK (66 aa). In terms of domain architecture, UIM 1 spans 211–230; it reads SADPELALALRVSMEEQRQR. The tract at residues 216-220 is essential for ubiquitin-binding; the sequence is LALAL. Residues 224–237 show a composition bias toward basic and acidic residues; sequence MEEQRQRQEEEARR. Residues 224–255 form a disordered region; it reads MEEQRQRQEEEARRAAAASAAEAGIATTGTED. A phosphothreonine mark is found at threonine 250 and threonine 253. Phosphoserine occurs at positions 256 and 266. The UIM 2 domain maps to 282–301; that stretch reads TEEEQIAYAMQMSLQGAEFG. Residues 287 to 291 are essential for ubiquitin-binding; sequence IAYAM. 2 disordered regions span residues 300–327 and 341–377; these read FGQAESADIDASSAMDTSEPAKEEDDYD and NLPGVDPNNEAIRNAMGSLASQATKDGKKDKKEEDKK. Serine 358 and serine 361 each carry phosphoserine. Residues 365-377 show a composition bias toward basic and acidic residues; the sequence is KDGKKDKKEEDKK.

This sequence belongs to the proteasome subunit S5A family. Component of the 19S proteasome regulatory particle complex. The 26S proteasome consists of a 20S core particle (CP) and two 19S regulatory subunits (RP). The regulatory particle is made of a lid composed of 9 subunits, a base containing 6 ATPases and few additional components including PSMD4. Interacts with NUB1. Interacts with SQSTM1. Interacts with UBQLN4. Interacts with UBE3A. Interacts with UBQLN1 (via ubiquitin-like domain). Interacts with DDI2.

Its function is as follows. Component of the 26S proteasome, a multiprotein complex involved in the ATP-dependent degradation of ubiquitinated proteins. This complex plays a key role in the maintenance of protein homeostasis by removing misfolded or damaged proteins, which could impair cellular functions, and by removing proteins whose functions are no longer required. Therefore, the proteasome participates in numerous cellular processes, including cell cycle progression, apoptosis, or DNA damage repair. PSMD4 acts as an ubiquitin receptor subunit through ubiquitin-interacting motifs and selects ubiquitin-conjugates for destruction. Displays a preferred selectivity for longer polyubiquitin chains. This is 26S proteasome non-ATPase regulatory subunit 4 (PSMD4) from Homo sapiens (Human).